Consider the following 603-residue polypeptide: Myotubularin (603 aa).

Positions 1–13 (MASASTSKYNSHS) are enriched in polar residues. Positions 1–25 (MASASTSKYNSHSLENESIKRTSRD) are disordered. A phosphoserine mark is found at Ser13 and Ser18. Basic and acidic residues predominate over residues 14–25 (LENESIKRTSRD). The GRAM domain maps to 29-97 (RDLTEAVPRL…GVISRIEKMG (69 aa)). Positions 163 to 538 (GWTVYNPVEE…RHLELWVNYY (376 aa)) constitute a Myotubularin phosphatase domain. The a 1,2-diacyl-sn-glycero-3-phospho-(1D-myo-inositol-3,5-bisphosphate) site is built by Asn288, Asn313, and Ile314. 3 residues coordinate a 1,2-diacyl-sn-glycero-3-phospho-(1D-myo-inositol-3-phosphate): Asn288, Asn313, and Ile314. Cys375 (phosphocysteine intermediate) is an active-site residue. Residues Ser376, Asp377, Gly378, Trp379, Asp380, Arg381, Lys417, and Arg421 each contribute to the a 1,2-diacyl-sn-glycero-3-phospho-(1D-myo-inositol-3,5-bisphosphate) site. A 1,2-diacyl-sn-glycero-3-phospho-(1D-myo-inositol-3-phosphate) is bound by residues Ser376, Asp377, Gly378, Trp379, Asp380, and Arg381. Arg421 is a binding site for a 1,2-diacyl-sn-glycero-3-phospho-(1D-myo-inositol-3-phosphate). The residue at position 495 (Thr495) is a Phosphothreonine. The segment at 579–603 (SAKLSDPPTSPSSPSQMMPHVQTHF) is disordered. Ser588 is modified (phosphoserine).

The protein belongs to the protein-tyrosine phosphatase family. Non-receptor class myotubularin subfamily. As to quaternary structure, heterodimer with MTMR12. Interacts with KMT2A/MLL1 (via SET domain). Interacts with DES in skeletal muscle but not in cardiac muscle. Interacts with SPEG.

It localises to the cytoplasm. Its subcellular location is the cell membrane. The protein resides in the cell projection. The protein localises to the filopodium. It is found in the ruffle. It localises to the late endosome. Its subcellular location is the myofibril. The protein resides in the sarcomere. The catalysed reaction is a 1,2-diacyl-sn-glycero-3-phospho-(1D-myo-inositol-3-phosphate) + H2O = a 1,2-diacyl-sn-glycero-3-phospho-(1D-myo-inositol) + phosphate. The enzyme catalyses a 1,2-diacyl-sn-glycero-3-phospho-(1D-myo-inositol-3,5-bisphosphate) + H2O = a 1,2-diacyl-sn-glycero-3-phospho-(1D-myo-inositol-5-phosphate) + phosphate. It carries out the reaction 1,2-dioctanoyl-sn-glycero-3-phospho-(1-D-myo-inositol-3-phosphate) + H2O = 1,2-dioctanoyl-sn-glycero-3-phospho-(1D-myo-inositol) + phosphate. It catalyses the reaction 1,2-dioctanoyl-sn-glycero-3-phospho-(1D-myo-inositol-3,5-bisphosphate) + H2O = 1,2-dioctanoyl-sn-glycero-3-phospho-(1D-myo-inositol-5-phosphate) + phosphate. The catalysed reaction is 1,2-dihexadecanoyl-sn-glycero-3-phospho-(1D-myo-inositol-3,5-phosphate) + H2O = 1,2-dihexadecanoyl-sn-glycero-3-phospho-(1D-myo-inositol-5-phosphate) + phosphate. With respect to regulation, allosterically activated by phosphatidylinositol 5-phosphate (PI5P). Its function is as follows. Lipid phosphatase which dephosphorylates phosphatidylinositol 3-monophosphate (PI3P) and phosphatidylinositol 3,5-bisphosphate (PI(3,5)P2). Has also been shown to dephosphorylate phosphotyrosine- and phosphoserine-containing peptides. Negatively regulates EGFR degradation through regulation of EGFR trafficking from the late endosome to the lysosome. Plays a role in vacuolar formation and morphology. Regulates desmin intermediate filament assembly and architecture. Plays a role in mitochondrial morphology and positioning. Required for skeletal muscle maintenance but not for myogenesis. In skeletal muscles, stabilizes MTMR12 protein levels. The sequence is that of Myotubularin from Homo sapiens (Human).